The sequence spans 117 residues: Immunoglobulin heavy variable 1-58 (117 aa).

The signal sequence occupies residues 1-19; it reads MDWIWRILFLVGAATGAHS. The interval 20–44 is framework-1; sequence QMQLVQSGPEVKKPGTSVKVSCKAS. An Ig-like domain is found at 20–117; that stretch reads QMQLVQSGPE…EDTAVYYCAA (98 aa). The cysteines at positions 41 and 115 are disulfide-linked. Residues 45 to 52 form a complementarity-determining-1 region; the sequence is GFTFTSSA. Residues 53–69 form a framework-2 region; sequence VQWVRQARGQRLEWIGW. A complementarity-determining-2 region spans residues 70–77; it reads IVVGSGNT. The interval 78-115 is framework-3; it reads NYAQKFQERVTITRDMSTSTAYMELSSLRSEDTAVYYC. Residues 116–117 form a complementarity-determining-3 region; that stretch reads AA.

In terms of assembly, immunoglobulins are composed of two identical heavy chains and two identical light chains; disulfide-linked.

The protein resides in the secreted. It localises to the cell membrane. Its function is as follows. V region of the variable domain of immunoglobulin heavy chains that participates in the antigen recognition. Immunoglobulins, also known as antibodies, are membrane-bound or secreted glycoproteins produced by B lymphocytes. In the recognition phase of humoral immunity, the membrane-bound immunoglobulins serve as receptors which, upon binding of a specific antigen, trigger the clonal expansion and differentiation of B lymphocytes into immunoglobulins-secreting plasma cells. Secreted immunoglobulins mediate the effector phase of humoral immunity, which results in the elimination of bound antigens. The antigen binding site is formed by the variable domain of one heavy chain, together with that of its associated light chain. Thus, each immunoglobulin has two antigen binding sites with remarkable affinity for a particular antigen. The variable domains are assembled by a process called V-(D)-J rearrangement and can then be subjected to somatic hypermutations which, after exposure to antigen and selection, allow affinity maturation for a particular antigen. This Homo sapiens (Human) protein is Immunoglobulin heavy variable 1-58.